Here is a 132-residue protein sequence, read N- to C-terminus: Small ribosomal subunit protein uS12 (132 aa).

Residue D89 is modified to 3-methylthioaspartic acid. Residues 102-132 (LDTSGVADRKQSRSKYGAKVPKAGAAPAKKK) are disordered. A compositionally biased stretch (low complexity) spans 118-132 (GAKVPKAGAAPAKKK).

It belongs to the universal ribosomal protein uS12 family. In terms of assembly, part of the 30S ribosomal subunit. Contacts proteins S8 and S17. May interact with IF1 in the 30S initiation complex.

Its function is as follows. With S4 and S5 plays an important role in translational accuracy. Interacts with and stabilizes bases of the 16S rRNA that are involved in tRNA selection in the A site and with the mRNA backbone. Located at the interface of the 30S and 50S subunits, it traverses the body of the 30S subunit contacting proteins on the other side and probably holding the rRNA structure together. The combined cluster of proteins S8, S12 and S17 appears to hold together the shoulder and platform of the 30S subunit. This Chlorobaculum tepidum (strain ATCC 49652 / DSM 12025 / NBRC 103806 / TLS) (Chlorobium tepidum) protein is Small ribosomal subunit protein uS12.